We begin with the raw amino-acid sequence, 157 residues long: Crossover junction endodeoxyribonuclease RuvC (157 aa).

Active-site residues include aspartate 7, glutamate 66, and aspartate 139. Mg(2+) is bound by residues aspartate 7, glutamate 66, and aspartate 139.

This sequence belongs to the RuvC family. In terms of assembly, homodimer which binds Holliday junction (HJ) DNA. The HJ becomes 2-fold symmetrical on binding to RuvC with unstacked arms; it has a different conformation from HJ DNA in complex with RuvA. In the full resolvosome a probable DNA-RuvA(4)-RuvB(12)-RuvC(2) complex forms which resolves the HJ. Requires Mg(2+) as cofactor.

It is found in the cytoplasm. The catalysed reaction is Endonucleolytic cleavage at a junction such as a reciprocal single-stranded crossover between two homologous DNA duplexes (Holliday junction).. In terms of biological role, the RuvA-RuvB-RuvC complex processes Holliday junction (HJ) DNA during genetic recombination and DNA repair. Endonuclease that resolves HJ intermediates. Cleaves cruciform DNA by making single-stranded nicks across the HJ at symmetrical positions within the homologous arms, yielding a 5'-phosphate and a 3'-hydroxyl group; requires a central core of homology in the junction. The consensus cleavage sequence is 5'-(A/T)TT(C/G)-3'. Cleavage occurs on the 3'-side of the TT dinucleotide at the point of strand exchange. HJ branch migration catalyzed by RuvA-RuvB allows RuvC to scan DNA until it finds its consensus sequence, where it cleaves and resolves the cruciform DNA. The polypeptide is Crossover junction endodeoxyribonuclease RuvC (Helicobacter pylori (strain Shi470)).